A 350-amino-acid polypeptide reads, in one-letter code: tRNA N6-adenosine threonylcarbamoyltransferase (350 aa).

2 residues coordinate Fe cation: histidine 109 and histidine 113. Residues 136-140 (TVSGG), aspartate 169, glycine 182, aspartate 186, and asparagine 284 each bind substrate. Residue aspartate 312 participates in Fe cation binding.

Belongs to the KAE1 / TsaD family. Fe(2+) serves as cofactor.

The protein resides in the cytoplasm. It catalyses the reaction L-threonylcarbamoyladenylate + adenosine(37) in tRNA = N(6)-L-threonylcarbamoyladenosine(37) in tRNA + AMP + H(+). Required for the formation of a threonylcarbamoyl group on adenosine at position 37 (t(6)A37) in tRNAs that read codons beginning with adenine. Is involved in the transfer of the threonylcarbamoyl moiety of threonylcarbamoyl-AMP (TC-AMP) to the N6 group of A37, together with TsaE and TsaB. TsaD likely plays a direct catalytic role in this reaction. This is tRNA N6-adenosine threonylcarbamoyltransferase from Chlorobium chlorochromatii (strain CaD3).